The following is a 209-amino-acid chain: Glycolipid transfer protein A (209 aa).

Tandem repeats lie at residues 45-55 and 56-66. Positions 45 to 66 are 2 X 12 AA approximate tandem repeats; that stretch reads IKADITGNITKIRSVYESNPTK. 48–55 serves as a coordination point for beta-D-galactosyl-(1-&gt;4)-beta-D-glucosyl-(1&lt;-&gt;1)-N-[(9Z)-octadecenoyl]-sphing-4-enine; it reads DITGNITK. Beta-D-galactosyl-(1-&gt;4)-beta-D-glucosyl-(1&lt;-&gt;1)-N-[(9Z)-octadecenoyl]-sphing-4-enine contacts are provided by His-140 and Tyr-207.

Belongs to the GLTP family.

It localises to the cytoplasm. Accelerates the intermembrane transfer of various glycolipids. Catalyzes the transfer of various glycosphingolipids between membranes but does not catalyze the transfer of phospholipids. May be involved in the intracellular translocation of glucosylceramides. The chain is Glycolipid transfer protein A (gltp-a) from Xenopus laevis (African clawed frog).